Reading from the N-terminus, the 204-residue chain is UPF0637 protein SA0957 (204 aa).

It belongs to the UPF0637 family.

This Staphylococcus aureus (strain N315) protein is UPF0637 protein SA0957.